The primary structure comprises 524 residues: Putative ribose/galactose/methyl galactoside import ATP-binding protein 1 (524 aa).

2 ABC transporter domains span residues 35–271 (LEVR…VGRE) and 281–520 (VPIG…RIMD). Residue 67 to 74 (GENGAGKS) coordinates ATP.

It belongs to the ABC transporter superfamily. Carbohydrate importer 2 (CUT2) (TC 3.A.1.2) family.

Its subcellular location is the cell inner membrane. The catalysed reaction is D-ribose(out) + ATP + H2O = D-ribose(in) + ADP + phosphate + H(+). It catalyses the reaction D-galactose(out) + ATP + H2O = D-galactose(in) + ADP + phosphate + H(+). Its function is as follows. Part of an ABC transporter complex involved in carbohydrate import. Could be involved in ribose, galactose and/or methyl galactoside import. Responsible for energy coupling to the transport system. The polypeptide is Putative ribose/galactose/methyl galactoside import ATP-binding protein 1 (Burkholderia cenocepacia (strain HI2424)).